Here is a 346-residue protein sequence, read N- to C-terminus: uncharacterized protein (346 aa).

The N-terminal stretch at 1–28 (MFEWMKNKKAISPILALLIVLGVTIVVG) is a signal peptide.

This is an uncharacterized protein from Methanocaldococcus jannaschii (strain ATCC 43067 / DSM 2661 / JAL-1 / JCM 10045 / NBRC 100440) (Methanococcus jannaschii).